Here is a 612-residue protein sequence, read N- to C-terminus: Chaperone protein DnaK (612 aa).

At Thr173 the chain carries Phosphothreonine; by autocatalysis. The span at 524–544 shows a compositional bias: basic and acidic residues; that stretch reads DDKVSEEDKQKAESAKDELKQ. 2 disordered regions span residues 524 to 560 and 572 to 612; these read DDKV…KKDA and LYEQ…DDKK. Low complexity predominate over residues 574–586; it reads EQVQQEAQQASGE. Residues 587–612 show a composition bias toward acidic residues; sequence QGEESGNQDDDVVDADYSEVDDDDKK.

This sequence belongs to the heat shock protein 70 family.

Functionally, acts as a chaperone. The polypeptide is Chaperone protein DnaK (Oceanobacillus iheyensis (strain DSM 14371 / CIP 107618 / JCM 11309 / KCTC 3954 / HTE831)).